Here is an 896-residue protein sequence, read N- to C-terminus: Valine--tRNA ligase (896 aa).

The 'HIGH' region motif lies at 48-58 (PNVTGSLHMGH). Positions 543 to 547 (KMSKS) match the 'KMSKS' region motif. Lysine 546 lines the ATP pocket. Residues 830-896 (VIDLDAERTR…ARLGAALERL (67 aa)) are a coiled coil.

It belongs to the class-I aminoacyl-tRNA synthetase family. ValS type 1 subfamily. As to quaternary structure, monomer.

The protein localises to the cytoplasm. It catalyses the reaction tRNA(Val) + L-valine + ATP = L-valyl-tRNA(Val) + AMP + diphosphate. Functionally, catalyzes the attachment of valine to tRNA(Val). As ValRS can inadvertently accommodate and process structurally similar amino acids such as threonine, to avoid such errors, it has a 'posttransfer' editing activity that hydrolyzes mischarged Thr-tRNA(Val) in a tRNA-dependent manner. This chain is Valine--tRNA ligase, found in Granulibacter bethesdensis (strain ATCC BAA-1260 / CGDNIH1).